The following is a 350-amino-acid chain: DNA polymerase delta subunit 3 (350 aa).

Residues 131–350 (EEKSKPLVRP…LESFFKRKAK (220 aa)) form a disordered region. 2 stretches are compositionally biased toward basic and acidic residues: residues 146–162 (TTPEETTGRKSKSKDMG) and 172–195 (MKKDRDDKETSRQNELRKRKEENL). T223 carries the phosphothreonine modification. Phosphoserine is present on S230. Basic and acidic residues predominate over residues 234 to 248 (SPKETDSNDKDKNND). Positions 249-262 (DLEDLLETTAEDSL) are enriched in acidic residues. The span at 274-286 (SETEHSKEPKSEE) shows a compositional bias: basic and acidic residues. Residues 320 to 332 (LSSSKKQETPSSN) are compositionally biased toward polar residues.

DNA polymerase delta is a heterotrimer of POL3, POL32 and HYS2. POL32 can form homodimers.

The protein resides in the nucleus. In terms of biological role, DNA polymerase delta (DNA polymerase III) participates in chromosomal DNA replication. It is required during synthesis of the leading and lagging DNA strands at the replication fork and binds at/or near replication origins and moves along DNA with the replication fork. It has 3'-5' proofreading exonuclease activity that correct errors arising during DNA replication. It is also involved in DNA synthesis during DNA repair. This is DNA polymerase delta subunit 3 (POL32) from Saccharomyces cerevisiae (strain ATCC 204508 / S288c) (Baker's yeast).